We begin with the raw amino-acid sequence, 211 residues long: Potassium-transporting ATPase KdpC subunit (211 aa).

Residues 13-35 (VVTMVLTGLLYPLAVTGLAQLLF) form a helical membrane-spanning segment.

Belongs to the KdpC family. The system is composed of three essential subunits: KdpA, KdpB and KdpC.

It is found in the cell membrane. Functionally, part of the high-affinity ATP-driven potassium transport (or Kdp) system, which catalyzes the hydrolysis of ATP coupled with the electrogenic transport of potassium into the cytoplasm. This subunit acts as a catalytic chaperone that increases the ATP-binding affinity of the ATP-hydrolyzing subunit KdpB by the formation of a transient KdpB/KdpC/ATP ternary complex. This chain is Potassium-transporting ATPase KdpC subunit, found in Myxococcus xanthus.